The following is a 296-amino-acid chain: MKKENWQKIENVYLLGKKIDKAKRMANKGESNTNMLSTEENIVKAKAVSRKKPVDVSYAGLARHESHVDTDYHGQALNTDNQDPKNYQARSFVKENELYESSQDCGHSRLAQILSEENQIKRLPQSDNTTTERIIENNPNYSNKPSKLKRALSGENSVFSIHQRNTLSPSSNLPRIPSDLYDIKQFLENLDARSFKSDMDLKRSQNMRRRATGYPAIVVPFLNGSLPQADLPPLRTIEDIDNLTREQCLTFIQGYGIPIDSSDTVYLKEKLRDAIGMRAFTDMSFEMNSFHLESPR.

The protein belongs to the UPF0612 family.

The protein resides in the cytoplasm. It is found in the nucleus. In terms of biological role, has a role in meiosis. In Schizosaccharomyces pombe (strain 972 / ATCC 24843) (Fission yeast), this protein is Meiotically up-regulated gene 2 protein (mug2).